Reading from the N-terminus, the 207-residue chain is LPS-assembly lipoprotein LptE (207 aa).

The N-terminal stretch at Met-1 to Gly-19 is a signal peptide. A lipid anchor (N-palmitoyl cysteine) is attached at Cys-20. A lipid anchor (S-diacylglycerol cysteine) is attached at Cys-20. Positions Lys-168–Lys-207 are disordered. Residues Asn-182 to Lys-207 show a composition bias toward polar residues.

This sequence belongs to the LptE lipoprotein family. As to quaternary structure, component of the lipopolysaccharide transport and assembly complex. Interacts with LptD.

The protein resides in the cell outer membrane. In terms of biological role, together with LptD, is involved in the assembly of lipopolysaccharide (LPS) at the surface of the outer membrane. Required for the proper assembly of LptD. Binds LPS and may serve as the LPS recognition site at the outer membrane. The polypeptide is LPS-assembly lipoprotein LptE (Yersinia pseudotuberculosis serotype O:1b (strain IP 31758)).